The primary structure comprises 623 residues: Activator of C kinase protein 1 (623 aa).

The disordered stretch occupies residues 141–230 (KESLGSPAVQ…GSSGGEDKLS (90 aa)). Residues 152-161 (ASISSGNRIS) are compositionally biased toward polar residues. The segment covering 176–193 (SESRILQEKVYRTEEKAP) has biased composition (basic and acidic residues). Glycyl lysine isopeptide (Lys-Gly) (interchain with G-Cter in ubiquitin) cross-links involve residues Lys184 and Lys191. The segment covering 206–215 (KINQPPTGSA) has biased composition (polar residues). Sel1-like repeat units follow at residues 318 to 361 (PPAM…KLNN), 408 to 444 (SACMYKLGMSHLYGLNMQKTDVLLAIKWFDKAAQKGD), 495 to 531 (PLAQWKLGNCYEFGDLGLPVVAKKSIYWYSKAAAAQP), and 576 to 611 (ARTEFALGFYYEKGVGCEVDLDLAKQYYQRAARMGF).

This Saccharomyces cerevisiae (strain ATCC 204508 / S288c) (Baker's yeast) protein is Activator of C kinase protein 1 (ACK1).